We begin with the raw amino-acid sequence, 355 residues long: Mannonate dehydratase (355 aa).

This sequence belongs to the mannonate dehydratase family. Requires Fe(2+) as cofactor. Mn(2+) is required as a cofactor.

It carries out the reaction D-mannonate = 2-dehydro-3-deoxy-D-gluconate + H2O. Its pathway is carbohydrate metabolism; pentose and glucuronate interconversion. Functionally, catalyzes the dehydration of D-mannonate. This Brachyspira hyodysenteriae (strain ATCC 49526 / WA1) protein is Mannonate dehydratase.